Here is a 466-residue protein sequence, read N- to C-terminus: 3-isopropylmalate dehydratase large subunit (466 aa).

[4Fe-4S] cluster contacts are provided by Cys347, Cys407, and Cys410.

Belongs to the aconitase/IPM isomerase family. LeuC type 1 subfamily. As to quaternary structure, heterodimer of LeuC and LeuD. [4Fe-4S] cluster is required as a cofactor.

It carries out the reaction (2R,3S)-3-isopropylmalate = (2S)-2-isopropylmalate. Its pathway is amino-acid biosynthesis; L-leucine biosynthesis; L-leucine from 3-methyl-2-oxobutanoate: step 2/4. In terms of biological role, catalyzes the isomerization between 2-isopropylmalate and 3-isopropylmalate, via the formation of 2-isopropylmaleate. The polypeptide is 3-isopropylmalate dehydratase large subunit (Pseudoalteromonas translucida (strain TAC 125)).